The following is a 450-amino-acid chain: Divalent metal cation transporter MntH (450 aa).

The next 11 membrane-spanning stretches (helical) occupy residues 34 to 54 (LSFL…GNWI), 61 to 81 (AQYG…AMLL), 108 to 128 (IAII…IAEV), 141 to 161 (IPLI…LFIM), 170 to 190 (AIVG…VYIS), 212 to 232 (GILY…NLYL), 263 to 283 (IQLS…ASLF), 305 to 325 (PVLG…ALLA), 361 to 381 (SLAV…AAKI), 383 to 403 (QLLV…LIPL), and 422 to 442 (VNII…YLIV).

This sequence belongs to the NRAMP family.

The protein localises to the cell membrane. Functionally, h(+)-stimulated, divalent metal cation uptake system. The sequence is that of Divalent metal cation transporter MntH from Staphylococcus aureus (strain bovine RF122 / ET3-1).